A 498-amino-acid chain; its full sequence is Probable deoxyguanosinetriphosphate triphosphohydrolase (498 aa).

One can recognise an HD domain in the interval 71-262; the sequence is RLTHSLEVQQ…MEAADDISYC (192 aa).

It belongs to the dGTPase family. Type 1 subfamily. Requires Mg(2+) as cofactor.

The catalysed reaction is dGTP + H2O = 2'-deoxyguanosine + triphosphate + H(+). Functionally, dGTPase preferentially hydrolyzes dGTP over the other canonical NTPs. This Pseudomonas aeruginosa (strain ATCC 15692 / DSM 22644 / CIP 104116 / JCM 14847 / LMG 12228 / 1C / PRS 101 / PAO1) protein is Probable deoxyguanosinetriphosphate triphosphohydrolase.